The primary structure comprises 102 residues: MKKVLALVVAAAMGLSSAAFAAETTTTPAPTATTTKAAPAKTTHHKKQHKAAPAQKAQAAKKHHKNTKAEQKAPEQKAQAAKKHAKKHSHQQPAKPAAQPAA.

Residues 1–21 (MKKVLALVVAAAMGLSSAAFA) form the signal peptide. Positions 21-41 (AAETTTTPAPTATTTKAAPAK) are enriched in low complexity. A disordered region spans residues 21–102 (AAETTTTPAP…PAKPAAQPAA (82 aa)). Residues 22–58 (AETTTTPAPTATTTKAAPAKTTHHKKQHKAAPAQKAQ) constitute a propeptide that is removed on maturation. Residues 80-90 (AAKKHAKKHSH) are compositionally biased toward basic residues. Residues 91–102 (QQPAKPAAQPAA) are compositionally biased toward low complexity.

Belongs to the Asr family. Post-translationally, proteolytic processing gives rise to the active protein.

The protein resides in the periplasm. Functionally, required for growth and/or survival at acidic conditions. The chain is Acid shock protein from Escherichia coli (strain K12 / MC4100 / BW2952).